The primary structure comprises 225 residues: MAEQECPVTNLLLLGRSENGKSSTGNTIIGEKYFEVNLFGRDMDQRCKMFRALIEDGPIINVIDTPGLLESSVSGDYLSKEIMNCLTMAEEGIHAVLFVLSITNRISQREEFTFNTLQQIFDDKILDYFIVVFTGGDELEADNQTLDDYLREGCPEFLTRVLKLCGGRKVLFNNKTKDKGKRNKQLNQLLAHVTDIRQQNGGIPYTENMHRKIKFKNLKYSNVKL.

In terms of domain architecture, AIG1-type G spans 6–214 (CPVTNLLLLG…YTENMHRKIK (209 aa)). The tract at residues 15-22 (GRSENGKS) is G1. Position 15–23 (15–23 (GRSENGKSS)) interacts with GTP. The tract at residues 42 to 46 (DMDQR) is G2. The interval 64–67 (DTPG) is G3. A G4 region spans residues 134–137 (TGGD). The interval 173–175 (NNK) is G5. Position 174 (asparagine 174) interacts with GTP.

It belongs to the TRAFAC class TrmE-Era-EngA-EngB-Septin-like GTPase superfamily. AIG1/Toc34/Toc159-like paraseptin GTPase family. IAN subfamily. Mostly expressed in pollen.

The protein is Immune-associated nucleotide-binding protein 1 of Arabidopsis thaliana (Mouse-ear cress).